The primary structure comprises 357 residues: Glutamyl endopeptidase (357 aa).

The first 29 residues, 1–29 (MKGKFLKVSSLFVATLTTATLVSSPAANA), serve as a signal peptide directing secretion. A propeptide spanning residues 30-68 (LSSKAMDNHPQQTQTDKQQTPKIQKGGNLKPLEQRERAN) is cleaved from the precursor. Positions 33 to 58 (KAMDNHPQQTQTDKQQTPKIQKGGNL) are disordered. Residues 40-54 (QQTQTDKQQTPKIQK) are compositionally biased toward low complexity. Catalysis depends on charge relay system residues His-119, Asp-161, and Ser-237. The segment at 282-357 (NFANDDHPNN…NNNSDNPDAA (76 aa)) is disordered. Tandem repeats lie at residues 289–291 (PNN), 292–294 (PDN), 295–297 (PDN), 298–300 (PNN), 301–303 (PDN), 304–306 (PNN), 307–309 (PDN), 310–312 (PNN), 313–315 (PDN), 316–318 (PDN), 319–321 (PNN), 322–324 (PDN), 325–327 (PNN), 328–330 (PDN), 331–333 (PNN), 337–339 (PNN), 340–342 (PNN), and 343–345 (PDN). An 18 X 3 AA repeats of P-[DN]-N region spans residues 289–345 (PNNPDNPDNPNNPDNPNNPDNPNNPDNPDNPNNPDNPNNPDNPNNPDQPNNPNNPDN). Residues 291-357 (NPDNPDNPNN…NNNSDNPDAA (67 aa)) show a composition bias toward low complexity.

It belongs to the peptidase S1B family. In terms of processing, proteolytically cleaved by aureolysin (aur). This cleavage leads to the activation of SspA.

Its subcellular location is the secreted. It catalyses the reaction Preferential cleavage: Glu-|-Xaa, Asp-|-Xaa.. In terms of biological role, preferentially cleaves peptide bonds on the carboxyl-terminal side of aspartate and glutamate. Along with other extracellular proteases it is involved in colonization and infection of human tissues. Required for proteolytic maturation of thiol protease SspB and inactivation of SspC, an inhibitor of SspB. It is the most important protease for degradation of fibronectin-binding protein (FnBP) and surface protein A, which are involved in adherence to host cells. May also protect bacteria against host defense mechanism by cleaving the immunoglobulin classes IgG, IgA and IgM. May be involved in the stability of secreted lipases. This is Glutamyl endopeptidase (sspA) from Staphylococcus aureus (strain MRSA252).